Reading from the N-terminus, the 231-residue chain is Flagellar L-ring protein (231 aa).

The first 18 residues, 1-18 (MNRFICVLALSGSAVLAG), serve as a signal peptide directing secretion. Cysteine 19 carries N-palmitoyl cysteine lipidation. Cysteine 19 carries the S-diacylglycerol cysteine lipid modification.

It belongs to the FlgH family. As to quaternary structure, the basal body constitutes a major portion of the flagellar organelle and consists of four rings (L,P,S, and M) mounted on a central rod.

Its subcellular location is the cell outer membrane. The protein localises to the bacterial flagellum basal body. In terms of biological role, assembles around the rod to form the L-ring and probably protects the motor/basal body from shearing forces during rotation. The chain is Flagellar L-ring protein from Pseudomonas fluorescens (strain ATCC BAA-477 / NRRL B-23932 / Pf-5).